The primary structure comprises 973 residues: E3 ubiquitin-protein ligase MIB2 (973 aa).

The region spanning 1-80 (MDLDPHAGVQ…AHDLLLYDNA (80 aa)) is the MIB/HERC2 1 domain. The segment at 86 to 138 (HPNIICDCCKKHGLRGMRWKCRVCFDYDLCTQCYMHNKHDLTHAFERYETSHS) adopts a ZZ-type zinc-finger fold. Zn(2+)-binding residues include Cys91, Cys94, Cys106, Cys109, Cys115, Cys118, His124, and His128. The region spanning 149 to 227 (LPRIPLRGIF…KVDLRCVGEA (79 aa)) is the MIB/HERC2 2 domain. Ser251 is modified (phosphoserine). ANK repeat units follow at residues 480–509 (QGRT…SMDL), 513–542 (EGNT…AVDA), 546–575 (TRST…DVNL), 579–611 (HADT…DVTA), 615–644 (QGFT…QLVD), 649–679 (DGFT…DVNV), 683–712 (KLQS…SVNT), 716–744 (EGDT…DPGP), and 785–814 (RGRS…ERQA). RING-type zinc fingers lie at residues 850-885 (CLVC…IRCQ) and 929-962 (CPIC…PICR).

As to quaternary structure, interacts with actin monomer. Post-translationally, ubiquitinated. Possibly via autoubiquitination. Highly expressed in brain, heart, liver and kidney.

It is found in the cytoplasm. The protein localises to the endosome. It carries out the reaction S-ubiquitinyl-[E2 ubiquitin-conjugating enzyme]-L-cysteine + [acceptor protein]-L-lysine = [E2 ubiquitin-conjugating enzyme]-L-cysteine + N(6)-ubiquitinyl-[acceptor protein]-L-lysine.. The protein operates within protein modification; protein ubiquitination. Its function is as follows. E3 ubiquitin-protein ligase that mediates ubiquitination of Delta receptors, which act as ligands of Notch proteins. Positively regulates the Delta-mediated Notch signaling by ubiquitinating the intracellular domain of Delta, leading to endocytosis of Delta receptors. The chain is E3 ubiquitin-protein ligase MIB2 (Mib2) from Mus musculus (Mouse).